Here is a 354-residue protein sequence, read N- to C-terminus: Anthranilate phosphoribosyltransferase (354 aa).

Residues Gly-94, 97–98 (GD), Thr-102, 104–107 (NIST), 122–130 (KHGNRAASS), and Ser-134 contribute to the 5-phospho-alpha-D-ribose 1-diphosphate site. Gly-94 serves as a coordination point for anthranilate. A Mg(2+)-binding site is contributed by Ser-106. Asn-125 provides a ligand contact to anthranilate. Anthranilate is bound at residue Arg-180. Mg(2+) contacts are provided by Asp-238 and Glu-239.

This sequence belongs to the anthranilate phosphoribosyltransferase family. In terms of assembly, homodimer. Requires Mg(2+) as cofactor.

It catalyses the reaction N-(5-phospho-beta-D-ribosyl)anthranilate + diphosphate = 5-phospho-alpha-D-ribose 1-diphosphate + anthranilate. It functions in the pathway amino-acid biosynthesis; L-tryptophan biosynthesis; L-tryptophan from chorismate: step 2/5. Its function is as follows. Catalyzes the transfer of the phosphoribosyl group of 5-phosphorylribose-1-pyrophosphate (PRPP) to anthranilate to yield N-(5'-phosphoribosyl)-anthranilate (PRA). This Streptomyces avermitilis (strain ATCC 31267 / DSM 46492 / JCM 5070 / NBRC 14893 / NCIMB 12804 / NRRL 8165 / MA-4680) protein is Anthranilate phosphoribosyltransferase.